We begin with the raw amino-acid sequence, 151 residues long: Aspartate carbamoyltransferase regulatory chain (151 aa).

Zn(2+)-binding residues include Cys107, Cys112, Cys135, and Cys138.

This sequence belongs to the PyrI family. As to quaternary structure, contains catalytic and regulatory chains. Zn(2+) is required as a cofactor.

Its function is as follows. Involved in allosteric regulation of aspartate carbamoyltransferase. The polypeptide is Aspartate carbamoyltransferase regulatory chain (Psychromonas ingrahamii (strain DSM 17664 / CCUG 51855 / 37)).